Consider the following 235-residue polypeptide: Phosphoribosylaminoimidazole-succinocarboxamide synthase (235 aa).

This sequence belongs to the SAICAR synthetase family.

The catalysed reaction is 5-amino-1-(5-phospho-D-ribosyl)imidazole-4-carboxylate + L-aspartate + ATP = (2S)-2-[5-amino-1-(5-phospho-beta-D-ribosyl)imidazole-4-carboxamido]succinate + ADP + phosphate + 2 H(+). It participates in purine metabolism; IMP biosynthesis via de novo pathway; 5-amino-1-(5-phospho-D-ribosyl)imidazole-4-carboxamide from 5-amino-1-(5-phospho-D-ribosyl)imidazole-4-carboxylate: step 1/2. This is Phosphoribosylaminoimidazole-succinocarboxamide synthase from Clostridium novyi (strain NT).